A 468-amino-acid polypeptide reads, in one-letter code: Zinc transporter SLC39A7 (468 aa).

The chain crosses the membrane as a helical span at residues Trp-10–Gly-30. Composition is skewed to basic and acidic residues over residues Arg-36–His-56 and His-64–His-100. Positions Arg-36–Ala-116 are disordered. Residue His-64 is modified to Pros-methylhistidine. 3 consecutive transmembrane segments (helical) span residues Ala-132 to Val-152, Leu-163 to Ile-183, and Gly-208 to Glu-228. Residues Gly-237–His-248 are compositionally biased toward basic residues. Positions Gly-237–Asp-313 are disordered. The span at Ser-249 to Ser-312 shows a compositional bias: basic and acidic residues. 3 helical membrane-spanning segments follow: residues Leu-385 to Val-405, Val-409 to Val-429, and Ser-447 to Leu-467.

The protein belongs to the ZIP transporter (TC 2.A.5) family. KE4/Catsup subfamily. In terms of assembly, homodimer. Post-translationally, rapidly phosphorylated by CK2 following Zn(2+) treatment. This phosphorylation is required for efficient cytosolic Zn(2+) release.

It localises to the endoplasmic reticulum membrane. The protein localises to the golgi apparatus. Its subcellular location is the cis-Golgi network membrane. It catalyses the reaction Zn(2+)(in) = Zn(2+)(out). Its function is as follows. Transports Zn(2+) from the endoplasmic reticulum (ER)/Golgi apparatus to the cytosol, playing an essential role in the regulation of cytosolic zinc levels. Acts as a gatekeeper of zinc release from intracellular stores, requiring post-translational activation by phosphorylation on residues, resulting in activation of multiple downstream pathways leading to cell growth and proliferation. Has an essential role in B cell development and is required for proper B cell receptor signaling. Plays an important role in maintaining intestinal epithelial homeostasis and skin dermis development by regulating ER function. Controls cell signaling pathways involved in glucose metabolism in skeletal muscle. Has a protective role against ER stress in different biological contexts. Mediates Zn(2+)-induced ferroptosis. This Rattus norvegicus (Rat) protein is Zinc transporter SLC39A7.